The chain runs to 477 residues: Bifunctional protein HldE (477 aa).

The interval 1 to 319 (MKITLPPFDQ…RALQEQEQSG (319 aa)) is ribokinase. Residue 195–198 (NLAE) coordinates ATP. Asp-264 is an active-site residue. The segment at 344–477 (MTNGCFDLLH…IERMQSAPDT (134 aa)) is cytidylyltransferase.

It in the N-terminal section; belongs to the carbohydrate kinase PfkB family. The protein in the C-terminal section; belongs to the cytidylyltransferase family. Homodimer.

The catalysed reaction is D-glycero-beta-D-manno-heptose 7-phosphate + ATP = D-glycero-beta-D-manno-heptose 1,7-bisphosphate + ADP + H(+). It carries out the reaction D-glycero-beta-D-manno-heptose 1-phosphate + ATP + H(+) = ADP-D-glycero-beta-D-manno-heptose + diphosphate. It participates in nucleotide-sugar biosynthesis; ADP-L-glycero-beta-D-manno-heptose biosynthesis; ADP-L-glycero-beta-D-manno-heptose from D-glycero-beta-D-manno-heptose 7-phosphate: step 1/4. The protein operates within nucleotide-sugar biosynthesis; ADP-L-glycero-beta-D-manno-heptose biosynthesis; ADP-L-glycero-beta-D-manno-heptose from D-glycero-beta-D-manno-heptose 7-phosphate: step 3/4. In terms of biological role, catalyzes the phosphorylation of D-glycero-D-manno-heptose 7-phosphate at the C-1 position to selectively form D-glycero-beta-D-manno-heptose-1,7-bisphosphate. Its function is as follows. Catalyzes the ADP transfer from ATP to D-glycero-beta-D-manno-heptose 1-phosphate, yielding ADP-D-glycero-beta-D-manno-heptose. This is Bifunctional protein HldE from Alkalilimnicola ehrlichii (strain ATCC BAA-1101 / DSM 17681 / MLHE-1).